Consider the following 936-residue polypeptide: Pre-rRNA-processing protein FHL1 (936 aa).

2 disordered regions span residues 1-90 and 139-169; these read MDGE…NGNL and DHSREVSSKEDINIEPVNPDEDEREKTQDNT. The segment covering 9–29 has biased composition (polar residues); sequence ESSNHVGTSSPTTETQFTIDS. Phosphoserine is present on serine 44. A compositionally biased stretch (basic and acidic residues) spans 139–150; the sequence is DHSREVSSKEDI. The residue at position 228 (serine 228) is a Phosphoserine. 2 positions are modified to phosphothreonine: threonine 230 and threonine 247. Over residues 243 to 257 the composition is skewed to polar residues; the sequence is PPQNTVTENNSTDAE. A disordered region spans residues 243–270; the sequence is PPQNTVTENNSTDAETTQRKLSEPIDAS. Phosphoserine is present on serine 264. The region spanning 300–357 is the FHA domain; sequence AIIGRRSENDFSHKVDVNLGPSKSISRRHAQIFYNFGTGRFELSIIGKNGAFVDDIFV. The segment covering 384 to 395 has biased composition (basic and acidic residues); sequence EQERNDDSKSPE. The segment at 384–442 is disordered; sequence EQERNDDSKSPENADIAESEINTRNLKKNEPKSKKKITTGAKPKKAQTKPAVKKEKKPP. The segment covering 416 to 430 has biased composition (basic residues); it reads SKKKITTGAKPKKAQ. A DNA-binding region (fork-head) is located at residues 460–552; the sequence is TKPTVSYSAM…ERQKKKQSEI (93 aa). The segment at 718–936 is disordered; sequence AKAQHSKPIR…EVNVSLEEKL (219 aa). Composition is skewed to polar residues over residues 742-753 and 765-777; these read SQLSASASSHPN and DPSSLSRFFQPRQ. Low complexity-rich tracts occupy residues 779–795 and 815–853; these read ARATSSVAATSVPAAAS and ESGTSSSSSSSSESGSESDSGSDDGSASGSGDNSSTSSE. Residues 854–863 show a composition bias toward acidic residues; sequence SESESDSGSE. The span at 864–911 shows a compositional bias: basic and acidic residues; that stretch reads VDEKNNKNEKIDSESIKNNESKDDIPSKDENSSNDNREISKTDEEGHD.

The protein resides in the nucleus. Acts as a transcriptional regulator that recruits coactivator IFH1 to the promoters of ribosomal protein genes. Recruited to ribosomal gene promoters by RAP1. The polypeptide is Pre-rRNA-processing protein FHL1 (FHL1) (Saccharomyces cerevisiae (strain ATCC 204508 / S288c) (Baker's yeast)).